Consider the following 142-residue polypeptide: Putative pre-16S rRNA nuclease (142 aa).

The protein belongs to the YqgF nuclease family.

The protein resides in the cytoplasm. Could be a nuclease involved in processing of the 5'-end of pre-16S rRNA. The polypeptide is Putative pre-16S rRNA nuclease (Chloroflexus aggregans (strain MD-66 / DSM 9485)).